We begin with the raw amino-acid sequence, 392 residues long: Tryptophan synthase beta chain (392 aa).

An N6-(pyridoxal phosphate)lysine modification is found at K84.

It belongs to the TrpB family. In terms of assembly, tetramer of two alpha and two beta chains. It depends on pyridoxal 5'-phosphate as a cofactor.

The enzyme catalyses (1S,2R)-1-C-(indol-3-yl)glycerol 3-phosphate + L-serine = D-glyceraldehyde 3-phosphate + L-tryptophan + H2O. Its pathway is amino-acid biosynthesis; L-tryptophan biosynthesis; L-tryptophan from chorismate: step 5/5. In terms of biological role, the beta subunit is responsible for the synthesis of L-tryptophan from indole and L-serine. The polypeptide is Tryptophan synthase beta chain (Campylobacter jejuni subsp. doylei (strain ATCC BAA-1458 / RM4099 / 269.97)).